The primary structure comprises 181 residues: Mitochondrial inner membrane protein Mpv17 (181 aa).

Helical transmembrane passes span 20–37, 51–67, 86–103, and 152–169; these read MCIAGTISGSGDCLAQYL, FSFLSSCFMAPSLFIWF, LCIDQLCFSPCFNAAILF, and VILNQVVAFFWNCYLSYI.

It belongs to the peroxisomal membrane protein PXMP2/4 family.

The protein localises to the mitochondrion inner membrane. Its function is as follows. Involved in mitochondria homeostasis. This Caenorhabditis elegans protein is Mitochondrial inner membrane protein Mpv17.